Reading from the N-terminus, the 650-residue chain is Acetyl-coenzyme A synthetase (650 aa).

Residues 190 to 193, threonine 308, and asparagine 332 each bind CoA; that span reads RGGR. Residues 384 to 386, 408 to 413, aspartate 497, and arginine 512 contribute to the ATP site; these read GEP and DTWWQT. Serine 520 is a CoA binding site. Arginine 523 serves as a coordination point for ATP. Residues valine 534, histidine 536, and valine 539 each coordinate Mg(2+). A CoA-binding site is contributed by arginine 581. N6-acetyllysine is present on lysine 606.

This sequence belongs to the ATP-dependent AMP-binding enzyme family. Mg(2+) is required as a cofactor. Post-translationally, acetylated. Deacetylation by the SIR2-homolog deacetylase activates the enzyme.

The enzyme catalyses acetate + ATP + CoA = acetyl-CoA + AMP + diphosphate. Its function is as follows. Catalyzes the conversion of acetate into acetyl-CoA (AcCoA), an essential intermediate at the junction of anabolic and catabolic pathways. AcsA undergoes a two-step reaction. In the first half reaction, AcsA combines acetate with ATP to form acetyl-adenylate (AcAMP) intermediate. In the second half reaction, it can then transfer the acetyl group from AcAMP to the sulfhydryl group of CoA, forming the product AcCoA. In Bradyrhizobium sp. (strain ORS 278), this protein is Acetyl-coenzyme A synthetase.